The sequence spans 434 residues: MSADGAEADGSTQVTVEEPVQQPSVVDRVASMPLISSTCDMVSAAYASTKESYPHVKTVCDAAEKGVRTLTAAAVSGAQPILSKLEPQIASASEYAHRGLDKLEENLPILQQPTERVLADTKELVSSKVSGAQEMVSSAKDTVATQLSEAVDATRGAVQSGVDKTKSVVTGGVQSVMGSRLGQMVLSGVDTVLGKSGEWADNHLPLTDAELARIATSLDGFDVASVQQQRQEQSYFVRLGSLSERLRQHAYEHSLGKLRATKQRAQEALLQLSQALSLMETVKEGVDQKLVEGQEKLHQMWLSWNQKQLQGPEKEPPKPEQVESRALTMFRDIAQQLQATCTSLGSSIQGLPTNVKDQVQQARRQVEDLQATFSSIHSFQDLSSSILAQSRERVASAREALDHMVEYVAQNTPVTWLVGPFAPGITEKAPEEKK.

A disordered region spans residues 1–22 (MSADGAEADGSTQVTVEEPVQQ). The residue at position 2 (serine 2) is an N-acetylserine. Serine 31 is subject to Phosphoserine. Lysine 65 carries the N6-acetyllysine modification. At serine 91 the chain carries Phosphoserine. Lysine 122 participates in a covalent cross-link: Glycyl lysine isopeptide (Lys-Gly) (interchain with G-Cter in SUMO1). 2 positions are modified to phosphoserine: serine 130 and serine 148. The residue at position 170 (threonine 170) is a Phosphothreonine. Phosphoserine occurs at positions 175 and 179. Threonine 216 carries the post-translational modification Phosphothreonine. A phosphoserine mark is found at serine 217 and serine 241. Tyrosine 251 carries the post-translational modification Phosphotyrosine. 2 coiled-coil regions span residues 252–280 (EHSL…SLME) and 353–377 (TNVK…SSIH).

Belongs to the perilipin family. In terms of assembly, homooligomer. Interacts with M6PR (via the cytoplasmic domain). Interacts with IGF2R (via the cytoplasmic domain). Phosphorylation at Tyr-251 by isoform 1 of CHKA (CHKalpha2) promotes dissociation from lipid droplets: dissociation is followed by recruitment of autophagosome machinery to lipid droplets and subsequent lipid droplet lipolysis.

It is found in the lipid droplet. Its subcellular location is the endosome membrane. The protein localises to the cytoplasm. In terms of biological role, structural component of lipid droplets, which is required for the formation and maintenance of lipid storage droplets. Required for the transport of mannose 6-phosphate receptors (MPR) from endosomes to the trans-Golgi network. This Pongo abelii (Sumatran orangutan) protein is Perilipin-3 (PLIN3).